The chain runs to 451 residues: Ribulose bisphosphate carboxylase large chain (451 aa).

N6,N6,N6-trimethyllysine is present on Lys5. Positions 114 and 164 each coordinate substrate. The active-site Proton acceptor is Lys166. Position 168 (Lys168) interacts with substrate. Mg(2+) contacts are provided by Lys192, Asp194, and Glu195. An N6-carboxylysine modification is found at Lys192. The active-site Proton acceptor is the His285. Arg286, His318, and Ser370 together coordinate substrate.

This sequence belongs to the RuBisCO large chain family. Type I subfamily. As to quaternary structure, heterohexadecamer of 8 large chains and 8 small chains; disulfide-linked. The disulfide link is formed within the large subunit homodimers. Mg(2+) serves as cofactor. The disulfide bond which can form in the large chain dimeric partners within the hexadecamer appears to be associated with oxidative stress and protein turnover.

It is found in the plastid. The protein localises to the chloroplast. The catalysed reaction is 2 (2R)-3-phosphoglycerate + 2 H(+) = D-ribulose 1,5-bisphosphate + CO2 + H2O. The enzyme catalyses D-ribulose 1,5-bisphosphate + O2 = 2-phosphoglycolate + (2R)-3-phosphoglycerate + 2 H(+). RuBisCO catalyzes two reactions: the carboxylation of D-ribulose 1,5-bisphosphate, the primary event in carbon dioxide fixation, as well as the oxidative fragmentation of the pentose substrate in the photorespiration process. Both reactions occur simultaneously and in competition at the same active site. The protein is Ribulose bisphosphate carboxylase large chain of Aristea glauca.